We begin with the raw amino-acid sequence, 813 residues long: Disintegrin and metalloproteinase domain-containing protein 33 (813 aa).

A signal peptide spans 1 to 29; it reads MGWRPRRARGTPLLLLLLLLLLWPVPGAG. The propeptide occupies 30 to 203; the sequence is VLQGHIPGQP…PGGPQSRGRR (174 aa). Topologically, residues 30–701 are extracellular; the sequence is VLQGHIPGQP…GPVQAENHDT (672 aa). A glycan (N-linked (GlcNAc...) asparagine) is linked at N109. Positions 131–138 match the Cysteine switch motif; it reads CTCSGMSG. A Zn(2+)-binding site is contributed by C133. Residue N145 is glycosylated (N-linked (GlcNAc...) asparagine). The tract at residues 184–205 is disordered; it reads PGNKAGMTSLPGGPQSRGRREA. The Peptidase M12B domain maps to 210–409; that stretch reads KYLELYIVAD…GGGACLSNAP (200 aa). N-linked (GlcNAc...) asparagine glycans are attached at residues N231 and N276. Cystine bridges form between C320–C404, C360–C388, and C361–C371. Position 345 (H345) interacts with Zn(2+). E346 is a catalytic residue. Zn(2+)-binding residues include H349 and H355. Positions 417-503 constitute a Disintegrin domain; the sequence is PALCGNGFVE…HCPPDVYLLD (87 aa). N-linked (GlcNAc...) asparagine glycosylation is present at N448. Cystine bridges form between C475/C495, C653/C663, C657/C669, and C671/C680. The EGF-like domain occupies 649 to 681; the sequence is ELQRCLTACHSHGVCNSNHNCHCAPGWAPPFCD. The helical transmembrane segment at 702–722 threads the bilayer; that stretch reads FLLAMLLSVLLPLLPGAGLAW. The Cytoplasmic portion of the chain corresponds to 723-813; it reads CCYRLPGAHL…QVQMPRSCLW (91 aa). The disordered stretch occupies residues 746 to 813; the sequence is SGPKDGPHRD…QVQMPRSCLW (68 aa). The segment covering 780 to 791 has biased composition (basic and acidic residues); that stretch reads ENSHEPSSHPEK.

Zn(2+) serves as cofactor. In terms of processing, the precursor is cleaved by a furin endopeptidase. In terms of tissue distribution, expressed in all tissues, except liver, with high expression in placenta, lung, spleen and veins.

The protein resides in the membrane. In Homo sapiens (Human), this protein is Disintegrin and metalloproteinase domain-containing protein 33 (ADAM33).